Reading from the N-terminus, the 1186-residue chain is Sericin 1 (1186 aa).

The N-terminal stretch at 1–21 (MRFVLCCTLIALAALSVKAFG) is a signal peptide. Polar residues-rich tracts occupy residues 39–48 (AASSESSYLN) and 104–115 (NGGSASAGQSRD). 3 disordered regions span residues 39-119 (AASS…SSLR), 131-494 (AVAA…EDSS), and 518-1157 (GGAT…VNRL). Residues 145–155 (AQQNAQANWNA) are compositionally biased toward low complexity. Residues 180 to 198 (SDKDITAASKDDSRADSSR) are compositionally biased toward basic and acidic residues. The segment covering 211-224 (SESAGLSDRSASSS) has biased composition (low complexity). Residues 256-275 (YYNSSPDGSYNAGTRDSSIS) show a composition bias toward polar residues. Residues 286 to 299 (ADKDQIRAANDRSS) are compositionally biased toward basic and acidic residues. Positions 300-312 (SKQLKQSSAQISS) are enriched in low complexity. Positions 321-334 (SKDRQYSNDKRSKS) are enriched in basic and acidic residues. Polar residues-rich tracts occupy residues 356-380 (RQSN…QTSK), 393-409 (AHSS…SSSY), and 416-445 (FSSS…ASRE). 6 stretches are compositionally biased toward low complexity: residues 465–491 (ASQS…TLSE), 518–537 (GGAT…VSGA), 553–698 (SSSS…YGYS), 705–1004 (RVSS…YSSS), 1015–1075 (SSSN…ASSE), and 1097–1145 (SSTT…TSSS). Tandem repeats lie at residues 593-630 (SSTG…GGSV), 631-668 (SSTG…GGSV), 669-706 (SSTG…GGRV), 707-744 (SSTG…DGSV), 745-782 (SSTG…DGSV), 783-820 (SSTG…DGSV), 821-858 (SSTG…DGSV), 859-896 (SSTG…DGSV), 897-934 (SSTG…DGSV), 935-972 (SSTG…DGSV), and 973-1010 (SSTG…DGSV). A compositionally biased stretch (basic residues) spans 1148-1157 (RSHHSGVNRL).

As to expression, produced exclusively in the middle (MSG) section of silk glands.

It is found in the secreted. Its function is as follows. Provides the silk fibroin thread with a sticky coating. Acts as a cement by sticking silk threads together. This is Sericin 1 (ser1) from Bombyx mori (Silk moth).